A 476-amino-acid polypeptide reads, in one-letter code: Cysteine--tRNA ligase (476 aa).

C36 is a binding site for Zn(2+). The 'HIGH' region signature appears at 38-48 (PTVYDYAHIGN). 3 residues coordinate Zn(2+): C221, H246, and E250. The 'KMSKS' region motif lies at 278–282 (KMSKS). Residue K281 coordinates ATP.

Belongs to the class-I aminoacyl-tRNA synthetase family. In terms of assembly, monomer. Zn(2+) is required as a cofactor.

It localises to the cytoplasm. It carries out the reaction tRNA(Cys) + L-cysteine + ATP = L-cysteinyl-tRNA(Cys) + AMP + diphosphate. The chain is Cysteine--tRNA ligase from Chlamydia felis (strain Fe/C-56) (Chlamydophila felis).